The sequence spans 277 residues: MPAKGVVDMTELSNLVAESLERLRRDKPLVQCLTNIVVANFTANVLLSAGAVPAMVDNPEESEGFASIADGVLVNTGTPYRETTEAMIAAARGAASSNTPWVLDPVGVGMSWRTRVVLDTLDVAAPAVIRANASEVLALAGTGASSRGPEAGDAVEDALASATQLVRHYGCVVAISGPVDHILDADRHVTVSSGHEWMTRVTGVGCSLGALTAAFAGIQNDHLIAAVSATAMLCVVAERAAERSAGPGAFAQALVDELFLVSPDEVGERGGLRDVTA.

Substrate is bound at residue M55. ATP contacts are provided by R130 and S176. Residue G203 coordinates substrate.

Belongs to the Thz kinase family. Mg(2+) is required as a cofactor.

It carries out the reaction 5-(2-hydroxyethyl)-4-methylthiazole + ATP = 4-methyl-5-(2-phosphooxyethyl)-thiazole + ADP + H(+). It participates in cofactor biosynthesis; thiamine diphosphate biosynthesis; 4-methyl-5-(2-phosphoethyl)-thiazole from 5-(2-hydroxyethyl)-4-methylthiazole: step 1/1. Functionally, catalyzes the phosphorylation of the hydroxyl group of 4-methyl-5-beta-hydroxyethylthiazole (THZ). This chain is Hydroxyethylthiazole kinase, found in Cutibacterium acnes (strain DSM 16379 / KPA171202) (Propionibacterium acnes).